Reading from the N-terminus, the 81-residue chain is Cytotoxin 2 (81 aa).

A signal peptide spans 1–21 (MKTLLLTLVVVTIVCLDLGYT). 4 cysteine pairs are disulfide-bonded: cysteine 24–cysteine 42, cysteine 35–cysteine 59, cysteine 63–cysteine 74, and cysteine 75–cysteine 80.

The protein belongs to the three-finger toxin family. Short-chain subfamily. Type IA cytotoxin sub-subfamily. In terms of assembly, monomer in solution; Homodimer and oligomer in the presence of negatively charged lipids forming a pore with a size ranging between 20 and 30 Angstroms. In terms of tissue distribution, expressed by the venom gland.

It is found in the secreted. Its subcellular location is the target cell membrane. Its function is as follows. Basic protein that binds to cell membrane and depolarizes cardiomyocytes. It also shows lytic activities, but 2-fold less important than that of CTX-A4. It binds to the integrin alpha-V/beta-3 (ITGAV/ITGB3) with a moderate affinity. It may interact with sulfatides in the cell membrane which induces pore formation and cell internalization and is responsible for cytotoxicity in cardiomyocytes. It may also target the mitochondrial membrane and induce mitochondrial swelling and fragmentation. This chain is Cytotoxin 2, found in Naja atra (Chinese cobra).